A 1238-amino-acid polypeptide reads, in one-letter code: ATP-dependent helicase/nuclease subunit A (1238 aa).

Residues 12–490 (VSWTDDQWKA…IDLNANFRSR (479 aa)) form the UvrD-like helicase ATP-binding domain. 33-40 (AAAGSGKT) is a binding site for ATP. Positions 510 to 818 (GEILYDDNAS…RLVTIHSSKG (309 aa)) constitute a UvrD-like helicase C-terminal domain.

The protein belongs to the helicase family. AddA subfamily. In terms of assembly, heterodimer of AddA and AddB/RexB. It depends on Mg(2+) as a cofactor.

The catalysed reaction is Couples ATP hydrolysis with the unwinding of duplex DNA by translocating in the 3'-5' direction.. It catalyses the reaction ATP + H2O = ADP + phosphate + H(+). The heterodimer acts as both an ATP-dependent DNA helicase and an ATP-dependent, dual-direction single-stranded exonuclease. Recognizes the chi site generating a DNA molecule suitable for the initiation of homologous recombination. The AddA nuclease domain is required for chi fragment generation; this subunit has the helicase and 3' -&gt; 5' nuclease activities. The sequence is that of ATP-dependent helicase/nuclease subunit A from Lysinibacillus sphaericus (strain C3-41).